The sequence spans 496 residues: Glycerol kinase (496 aa).

Residue Thr-12 coordinates ADP. ATP is bound by residues Thr-12, Thr-13, and Ser-14. A sn-glycerol 3-phosphate-binding site is contributed by Thr-12. Arg-16 provides a ligand contact to ADP. The sn-glycerol 3-phosphate site is built by Arg-82, Glu-83, and Tyr-134. Positions 82, 83, and 134 each coordinate glycerol. At His-230 the chain carries Phosphohistidine; by HPr. Residue Asp-244 participates in sn-glycerol 3-phosphate binding. Residues Asp-244 and Gln-245 each coordinate glycerol. ADP is bound by residues Thr-266 and Gly-309. ATP contacts are provided by Thr-266, Gly-309, Gln-313, and Gly-410. The ADP site is built by Gly-410 and Asn-414.

Belongs to the FGGY kinase family. As to quaternary structure, homotetramer and homodimer (in equilibrium). The phosphoenolpyruvate-dependent sugar phosphotransferase system (PTS), including enzyme I, and histidine-containing protein (HPr) are required for the phosphorylation, which leads to the activation of the enzyme.

The catalysed reaction is glycerol + ATP = sn-glycerol 3-phosphate + ADP + H(+). Its pathway is polyol metabolism; glycerol degradation via glycerol kinase pathway; sn-glycerol 3-phosphate from glycerol: step 1/1. Its activity is regulated as follows. Activated by phosphorylation and inhibited by fructose 1,6-bisphosphate (FBP). Functionally, key enzyme in the regulation of glycerol uptake and metabolism. Catalyzes the phosphorylation of glycerol to yield sn-glycerol 3-phosphate. The polypeptide is Glycerol kinase (Bacillus mycoides (strain KBAB4) (Bacillus weihenstephanensis)).